We begin with the raw amino-acid sequence, 128 residues long: Large ribosomal subunit protein uL24 (128 aa).

The interval 105–128 (KAKSRQVGKEKGKYKEETIEKMQE) is disordered.

It belongs to the universal ribosomal protein uL24 family. Component of the large ribosomal subunit.

Its subcellular location is the cytoplasm. Component of the large ribosomal subunit. The ribosome is a large ribonucleoprotein complex responsible for the synthesis of proteins in the cell. The polypeptide is Large ribosomal subunit protein uL24 (RPL26) (Gallus gallus (Chicken)).